We begin with the raw amino-acid sequence, 505 residues long: ATP synthase subunit alpha, chloroplastic (505 aa).

Residue glycine 172–threonine 179 participates in ATP binding.

The protein belongs to the ATPase alpha/beta chains family. As to quaternary structure, F-type ATPases have 2 components, CF(1) - the catalytic core - and CF(0) - the membrane proton channel. CF(1) has five subunits: alpha(3), beta(3), gamma(1), delta(1), epsilon(1). CF(0) has four main subunits: a, b, b' and c.

The protein localises to the plastid. It is found in the chloroplast thylakoid membrane. The catalysed reaction is ATP + H2O + 4 H(+)(in) = ADP + phosphate + 5 H(+)(out). In terms of biological role, produces ATP from ADP in the presence of a proton gradient across the membrane. The alpha chain is a regulatory subunit. This Antithamnion sp. (Red alga) protein is ATP synthase subunit alpha, chloroplastic.